The following is a 65-amino-acid chain: Disintegrin CC8B (65 aa).

Positions 1–65 constitute a Disintegrin domain; that stretch reads NSAHPCCDPV…DCPRNPWHKS (65 aa). 4 disulfides stabilise this stretch: C6–C29, C20–C26, C25–C50, and C38–C57. The Cell attachment site; atypical (WGD) signature appears at 42–44; the sequence is WGD.

This sequence belongs to the disintegrin family. Dimeric disintegrin subfamily. As to quaternary structure, heterodimer with CC8A; disulfide-linked. As to expression, expressed by the venom gland.

The protein localises to the secreted. Its function is as follows. Inhibits integrins alpha-IIb/beta-3 (ITGA2B/ITGB3), alpha-V/beta-3 (ITGAV/ITGB3), and alpha-5/beta-1 (ITGA5/ITGB1). The chain is Disintegrin CC8B from Cerastes cerastes (Horned desert viper).